A 1206-amino-acid polypeptide reads, in one-letter code: STE20-like serine/threonine-protein kinase (1206 aa).

At Ser-14 the chain carries Phosphoserine. The Protein kinase domain maps to 34–292 (WEIIGELGDG…TSQLLQHPFV (259 aa)). Residues 40–48 (LGDGAFGKV) and Lys-63 each bind ATP. Asp-155 (proton acceptor) is an active-site residue. Thr-183 is subject to Phosphothreonine. Residue Ser-189 is modified to Phosphoserine. The tract at residues 308–352 (KAEVTEEVEDGKEEDDDDETESALPIPANKRASSDLSIASSEEDK) is disordered. Residues 312-328 (TEEVEDGKEEDDDDETE) are compositionally biased toward acidic residues. Residues Ser-340, Ser-341, Ser-344, Ser-347, Ser-348, Ser-354, and Ser-372 each carry the phosphoserine modification. The disordered stretch occupies residues 364–440 (SERTEHNTSG…ESQPDTEDQQ (77 aa)). Basic and acidic residues-rich tracts occupy residues 381–395 (LSEKPTPEGPEKTVD) and 420–429 (ENGREKKRPQ). Residues 468–492 (EEDRNEENQEIIENKLTQSEEIKDI) are a coiled coil. 2 disordered regions span residues 515–761 (DNEV…SSSD) and 773–792 (TKDSGSVSLQETRRQKKTLK). Basic and acidic residues predominate over residues 520-536 (FTKEETQEKLGKDDKTH). Residues Ser-545 and Ser-563 each carry the phosphoserine modification. The span at 556–565 (TQKSAEQSQD) shows a compositional bias: polar residues. A compositionally biased stretch (basic and acidic residues) spans 584-609 (KATEGPEAHGAEEEPRSGERVEDKQL). Acidic residues predominate over residues 634–643 (EEPETDEVDQ). Phosphoserine is present on residues Ser-645, Ser-649, and Ser-668. Low complexity predominate over residues 691–702 (AEPQAPAASQAS). A compositionally biased stretch (polar residues) spans 747 to 757 (TDSGTGSTVEN). 2 positions are modified to phosphoserine: Ser-776 and Ser-778. The residue at position 813 (Thr-813) is a Phosphothreonine. A Phosphoserine modification is found at Ser-817. Residues 825–1037 (LRRQELRELR…LKNRQTQERA (213 aa)) adopt a coiled-coil conformation. The region spanning 874–909 (DQEIENLEKQQKQTIERLEQEHTNRLRDEAKRIKGE) is the UVR domain. Thr-1065 is modified (phosphothreonine). Residues 1077–1151 (AAQEEKRQKN…ELKEWREKLR (75 aa)) are a coiled coil. Residues 1079 to 1099 (QEEKRQKNERMAQHQKHESQM) are compositionally biased toward basic and acidic residues. 2 disordered regions span residues 1079–1100 (QEEKRQKNERMAQHQKHESQMR) and 1181–1206 (LNPSAQSRGCLQTSHPSSTRAPAWAG). Residues 1181–1200 (LNPSAQSRGCLQTSHPSSTR) show a composition bias toward polar residues.

The protein belongs to the protein kinase superfamily. STE Ser/Thr protein kinase family. STE20 subfamily. Post-translationally, proteolytically cleaved by caspase-3. In terms of processing, autophosphorylated.

The protein localises to the cytoplasm. It carries out the reaction L-seryl-[protein] + ATP = O-phospho-L-seryl-[protein] + ADP + H(+). The enzyme catalyses L-threonyl-[protein] + ATP = O-phospho-L-threonyl-[protein] + ADP + H(+). Its function is as follows. Mediates apoptosis and actin stress fiber dissolution. The chain is STE20-like serine/threonine-protein kinase (Slk) from Rattus norvegicus (Rat).